The following is a 1371-amino-acid chain: Pleckstrin homology-like domain family B member 1 (1371 aa).

Residue serine 51 is modified to Phosphoserine. Positions 64–125 constitute an FHA domain; the sequence is TVIGSAARDI…LTQGCMLCLG (62 aa). Asymmetric dimethylarginine is present on arginine 131. The segment at 153-182 is disordered; the sequence is GPTYNPGSAESESLVNGNHTAQPATRAPSA. Polar residues predominate over residues 157–175; it reads NPGSAESESLVNGNHTAQP. Residues serine 192, serine 220, and serine 223 each carry the phosphoserine modification. Disordered regions lie at residues 211-336 and 368-573; these read AAGK…TDSP and PSSG…RVPI. 2 stretches are compositionally biased toward low complexity: residues 252-273 and 296-312; these read SPAF…HSPS and LQPP…SDSP. 2 positions are modified to phosphoserine: serine 325 and serine 335. Residues 368–377 show a composition bias toward polar residues; that stretch reads PSSGARSQPA. Residues serine 382, serine 405, serine 431, serine 445, serine 463, serine 472, serine 491, and serine 503 each carry the phosphoserine modification. The span at 464-477 shows a compositional bias: low complexity; it reads PSLSRRALSPLPAR. The span at 483-493 shows a compositional bias: basic and acidic residues; the sequence is KLSREVAESPR. An Omega-N-methylarginine modification is found at arginine 514. A phosphoserine mark is found at serine 520 and serine 522. Position 524 is a phosphothreonine (threonine 524). Serine 535, serine 541, serine 553, serine 557, serine 565, serine 580, serine 585, and serine 683 each carry phosphoserine. The segment covering 547–559 has biased composition (polar residues); the sequence is GSLTGASPRQSPR. Disordered regions lie at residues 672 to 714 and 942 to 1020; these read ESGG…GAKH and GLAA…QNGT. Composition is skewed to basic and acidic residues over residues 682 to 696 and 703 to 714; these read ESME…KEEC and QQEHEDAPGAKH. Residues 688–798 adopt a coiled-coil conformation; sequence DEENLKEECS…ETGIQKDRDK (111 aa). Residues serine 976 and serine 1022 each carry the phosphoserine modification. Residues 976–997 show a composition bias toward low complexity; the sequence is SPLPRTRSGPLPSSSGSSSSSS. Residues 1124 to 1143 form a disordered region; it reads SMETSISTGGNSACSPDNMS. The stretch at 1150–1216 forms a coiled coil; it reads MGKIEEMEKM…QQLVEKEVKL (67 aa). The PH domain occupies 1261–1364; the sequence is SKVCRGYLIK…WMDVIVTGAE (104 aa).

This Mus musculus (Mouse) protein is Pleckstrin homology-like domain family B member 1 (Phldb1).